The sequence spans 209 residues: MAKMWDISQTLRPDLPVWPGDTAFACDEVWSIGPDCPVQVSRLTLSTHSGAHADAPSHYDQAGDDIASTPLELYVGPCRLVTASGNGPHVQPADLDWAAIDGATRVLVRTYAKFPADDWDPDFRALHADTIERLAATGCRLIGVDAASLDPQTSKTMDAHHAVQRHDMRILEGLVFDGVPDGHYELIALPLKIAGADAAPLRAVLRELP.

Position 18 (W18) interacts with substrate. Zn(2+)-binding residues include H48, H52, and D54. Catalysis depends on H58, which acts as the Proton donor/acceptor. Zn(2+) contacts are provided by H160 and E172.

The protein belongs to the Cyclase 1 superfamily. KynB family. Homodimer. Requires Zn(2+) as cofactor.

It catalyses the reaction N-formyl-L-kynurenine + H2O = L-kynurenine + formate + H(+). It participates in amino-acid degradation; L-tryptophan degradation via kynurenine pathway; L-kynurenine from L-tryptophan: step 2/2. Its function is as follows. Catalyzes the hydrolysis of N-formyl-L-kynurenine to L-kynurenine, the second step in the kynurenine pathway of tryptophan degradation. The protein is Kynurenine formamidase of Maricaulis maris (strain MCS10) (Caulobacter maris).